We begin with the raw amino-acid sequence, 177 residues long: ATP synthase subunit delta (177 aa).

Belongs to the ATPase delta chain family. As to quaternary structure, F-type ATPases have 2 components, F(1) - the catalytic core - and F(0) - the membrane proton channel. F(1) has five subunits: alpha(3), beta(3), gamma(1), delta(1), epsilon(1). F(0) has three main subunits: a(1), b(2) and c(10-14). The alpha and beta chains form an alternating ring which encloses part of the gamma chain. F(1) is attached to F(0) by a central stalk formed by the gamma and epsilon chains, while a peripheral stalk is formed by the delta and b chains.

The protein localises to the cell inner membrane. In terms of biological role, f(1)F(0) ATP synthase produces ATP from ADP in the presence of a proton or sodium gradient. F-type ATPases consist of two structural domains, F(1) containing the extramembraneous catalytic core and F(0) containing the membrane proton channel, linked together by a central stalk and a peripheral stalk. During catalysis, ATP synthesis in the catalytic domain of F(1) is coupled via a rotary mechanism of the central stalk subunits to proton translocation. Functionally, this protein is part of the stalk that links CF(0) to CF(1). It either transmits conformational changes from CF(0) to CF(1) or is implicated in proton conduction. This chain is ATP synthase subunit delta, found in Shewanella sediminis (strain HAW-EB3).